The following is a 284-amino-acid chain: Co-chaperone protein DjlA (284 aa).

Over 1 to 6 (MHIFGK) the chain is Periplasmic. A helical transmembrane segment spans residues 7-30 (ILGAFFGLLLGGPFGLLFGLFIGH). At 31 to 284 (QFDKARRLSQ…DLIKKVKGFK (254 aa)) the chain is on the cytoplasmic side. Positions 218–284 (DAYKILDVSP…DLIKKVKGFK (67 aa)) constitute a J domain.

In terms of assembly, homodimer.

The protein localises to the cell inner membrane. In terms of biological role, regulatory DnaK co-chaperone. Direct interaction between DnaK and DjlA is needed for the induction of the wcaABCDE operon, involved in the synthesis of a colanic acid polysaccharide capsule, possibly through activation of the RcsB/RcsC phosphotransfer signaling pathway. The colanic acid capsule may help the bacterium survive conditions outside the host. This Vibrio parahaemolyticus serotype O3:K6 (strain RIMD 2210633) protein is Co-chaperone protein DjlA.